Consider the following 387-residue polypeptide: Small ribosomal subunit protein uS5m (387 aa).

The transit peptide at 1–22 (MLRSFSHFLQIGSRRQPTYFRC) directs the protein to the mitochondrion. The interval 33–87 (FKNDPKKELNSNLNEKSVEESSKNETKEQFNSSSIPRESESEGKTASNTSPLSPK) is disordered. Residues 48–60 (KSVEESSKNETKE) show a composition bias toward basic and acidic residues. Serine 85 is subject to Phosphoserine. An S5 DRBM domain is found at 225–288 (LMFVPLVRRR…GRAVKNMVYI (64 aa)).

Belongs to the universal ribosomal protein uS5 family. Component of the mitochondrial small ribosomal subunit (mt-SSU). Mature yeast 74S mitochondrial ribosomes consist of a small (37S) and a large (54S) subunit. The 37S small subunit contains a 15S ribosomal RNA (15S mt-rRNA) and at least 32 different proteins. The 54S large subunit contains a 21S rRNA (21S mt-rRNA) and at least 45 different proteins. uS3m, uS4m and uS5m form the narrow entry site of the mRNA channel.

Its subcellular location is the mitochondrion. Its function is as follows. Component of the mitochondrial ribosome (mitoribosome), a dedicated translation machinery responsible for the synthesis of mitochondrial genome-encoded proteins, including at least some of the essential transmembrane subunits of the mitochondrial respiratory chain. The mitoribosomes are attached to the mitochondrial inner membrane and translation products are cotranslationally integrated into the membrane. This Schizosaccharomyces pombe (strain 972 / ATCC 24843) (Fission yeast) protein is Small ribosomal subunit protein uS5m (mrp5).